The chain runs to 356 residues: 3-isopropylmalate dehydrogenase (356 aa).

73–86 is a binding site for NAD(+); sequence GTQYDGLPREKRPE. Substrate-binding residues include Arg93, Arg103, Arg131, and Asp220. The Mg(2+) site is built by Asp220, Asp244, and Asp248. 278–290 contacts NAD(+); the sequence is GSAPDIAGKGIAN.

Belongs to the isocitrate and isopropylmalate dehydrogenases family. LeuB type 1 subfamily. In terms of assembly, homodimer. It depends on Mg(2+) as a cofactor. The cofactor is Mn(2+).

Its subcellular location is the cytoplasm. The catalysed reaction is (2R,3S)-3-isopropylmalate + NAD(+) = 4-methyl-2-oxopentanoate + CO2 + NADH. It functions in the pathway amino-acid biosynthesis; L-leucine biosynthesis; L-leucine from 3-methyl-2-oxobutanoate: step 3/4. In terms of biological role, catalyzes the oxidation of 3-carboxy-2-hydroxy-4-methylpentanoate (3-isopropylmalate) to 3-carboxy-4-methyl-2-oxopentanoate. The product decarboxylates to 4-methyl-2 oxopentanoate. The chain is 3-isopropylmalate dehydrogenase from Nitrosomonas europaea (strain ATCC 19718 / CIP 103999 / KCTC 2705 / NBRC 14298).